We begin with the raw amino-acid sequence, 142 residues long: Large ribosomal subunit protein uL11 (142 aa).

Belongs to the universal ribosomal protein uL11 family. In terms of assembly, part of the ribosomal stalk of the 50S ribosomal subunit. Interacts with L10 and the large rRNA to form the base of the stalk. L10 forms an elongated spine to which L12 dimers bind in a sequential fashion forming a multimeric L10(L12)X complex. In terms of processing, one or more lysine residues are methylated.

Functionally, forms part of the ribosomal stalk which helps the ribosome interact with GTP-bound translation factors. The protein is Large ribosomal subunit protein uL11 of Mycobacterium sp. (strain MCS).